The sequence spans 513 residues: Solute carrier family 2, facilitated glucose transporter member 7 (513 aa).

Topologically, residues 1 to 21 are cytoplasmic; it reads MEDKEIGTPLPLPHSEARLQP. The chain crosses the membrane as a helical span at residues 22 to 42; that stretch reads TLVLTTLSAAFGSVFQYGYNI. At 43 to 78 the chain is on the extracellular side; sequence AVINTPHKVFKSFYNDTHFERHGTFMDESTLLLLWS. Asn57 carries N-linked (GlcNAc...) asparagine glycosylation. The chain crosses the membrane as a helical span at residues 79–99; it reads CTVSMFPLGGLLGSLVVGLMV. Over 100-107 the chain is Cytoplasmic; sequence NKWGRKGT. A helical membrane pass occupies residues 108 to 128; that stretch reads LLINNVFAITSAVLMGVSKVA. At 129–138 the chain is on the extracellular side; it reads RAFELIILSR. The helical transmembrane segment at 139 to 159 threads the bilayer; it reads VLVGICAGIAYSTLPMYLGEL. The Cytoplasmic portion of the chain corresponds to 160–172; it reads APQNLRGALGTMT. Residues 173 to 193 form a helical membrane-spanning segment; it reads EVFVIIGVLLAQIFSLQAILG. The Extracellular segment spans residues 194–198; that stretch reads NATGW. The chain crosses the membrane as a helical span at residues 199 to 219; sequence PILLALTGVPAVIQLLSLPFF. Residues 220–282 are Cytoplasmic-facing; the sequence is PESPRYTLIE…LNLFTFRPLR (63 aa). Residues 283-303 form a helical membrane-spanning segment; sequence WQLISIVVLMAGQQLSGINAV. D-glucose-binding positions include 295–296 and Asn301; that span reads QQ. The Extracellular portion of the chain corresponds to 304–322; the sequence is NYYADVIYTSAGVDPTQSQ. The helical transmembrane segment at 323-343 threads the bilayer; that stretch reads YVTLGSGVINLVMTLVSAVII. Residue Asn332 participates in D-glucose binding. Over 344-351 the chain is Cytoplasmic; that stretch reads ERLGRRIL. The chain crosses the membrane as a helical span at residues 352–372; it reads LLSGYAICCSACLVLTVALLL. Residues 373–380 are Extracellular-facing; it reads QSTAPELS. The chain crosses the membrane as a helical span at residues 381 to 401; that stretch reads YLSIVCVFSYIVGHSIGPSPV. The Cytoplasmic segment spans residues 402 to 416; the sequence is PSVVRTEIVLQSSRT. Residues 417-437 traverse the membrane as a helical segment; it reads AAFTVDGAVHWLTNFIVGLTF. The Extracellular portion of the chain corresponds to 438 to 446; sequence PSIQVAIGA. Residues 447–467 form a helical membrane-spanning segment; that stretch reads YSFLVFAGVCILTAAYIYVVI. The Cytoplasmic portion of the chain corresponds to 468–513; the sequence is PETKGRTFVEINCAFAKRNGVEFPEEKEVATAKPHTPSLPTKETAF. Residues 494–513 are disordered; that stretch reads KEVATAKPHTPSLPTKETAF.

This sequence belongs to the major facilitator superfamily. Sugar transporter (TC 2.A.1.1) family. Glucose transporter subfamily.

The protein localises to the cell membrane. Its subcellular location is the apical cell membrane. The enzyme catalyses D-glucose(out) = D-glucose(in). It catalyses the reaction D-fructose(out) = D-fructose(in). Probable sugar transporter. Even if its physiological substrate is subject to discussion, it is able to transport glucose and fructose. Does not transport galactose, 2-deoxy-d-glucose and xylose. This Mus musculus (Mouse) protein is Solute carrier family 2, facilitated glucose transporter member 7.